A 152-amino-acid chain; its full sequence is Transcriptional repressor NrdR (152 aa).

A zinc finger lies at 3–34; that stretch reads CPYCNASETKVIDSRLAAEGAQVRRRRSCNSC. The ATP-cone domain maps to 49–139; that stretch reads PRIIKSSGKI…VYRDFQDIDA (91 aa).

It belongs to the NrdR family. Zn(2+) serves as cofactor.

Its function is as follows. Negatively regulates transcription of bacterial ribonucleotide reductase nrd genes and operons by binding to NrdR-boxes. This Psychrobacter cryohalolentis (strain ATCC BAA-1226 / DSM 17306 / VKM B-2378 / K5) protein is Transcriptional repressor NrdR.